A 1491-amino-acid polypeptide reads, in one-letter code: Neurexin-1a (1491 aa).

The signal sequence occupies residues 1–27; the sequence is MSFSMRNGAHLIWIGLLVCCLVDMGAS. The 181-residue stretch at 28–208 folds into the Laminin G-like 1 domain; sequence MEFTGAEGQW…SDICEADHIC (181 aa). Residues 28 to 1415 lie on the Extracellular side of the membrane; the sequence is MEFTGAEGQW…EVIRESSSTT (1388 aa). In terms of domain architecture, EGF-like 1 spans 198-236; the sequence is NSDICEADHICLNGGVCSIVNDEPICDCSETGFQGKDCS. 3 cysteine pairs are disulfide-bonded: C202–C214, C208–C223, and C225–C235. 2 Laminin G-like domains span residues 263–460 and 467–661; these read MATF…AFKC and DPVT…KPSC. The Ca(2+) site is built by D309, L326, and M394. Cystine bridges form between C424/C460, C632/C661, C669/C680, C674/C689, and C691/C701. In terms of domain architecture, EGF-like 2 spans 665 to 702; that stretch reads PPKQCLSNPCLNSGTCREGWNRYVCDCSGTGYLGRSCE. Laminin G-like domains lie at 707 to 880 and 894 to 1069; these read ILSY…IDYC and DPVT…ERGC. Cystine bridges form between C1041–C1069, C1076–C1087, C1081–C1096, and C1098–C1108. Residues 1072-1109 enclose the EGF-like 3 domain; it reads PSTTCQEDSCSNQGVCLQQWEGFSCDCSMTSYGGPLCN. The Laminin G-like 6 domain occupies 1113-1314; it reads TTYIFGRDGG…DPNVRVEGSA (202 aa). The disordered stretch occupies residues 1318-1408; that stretch reads GDMPSSSITP…AKGYPSPEVI (91 aa). The segment covering 1322-1353 has biased composition (low complexity); that stretch reads SSSITPQSSVSAAGNRSETSPSITDITTTTAS. The span at 1354–1364 shows a compositional bias: polar residues; the sequence is NRQGKQTTTPQ. A helical transmembrane segment spans residues 1416–1436; the sequence is GMVVGIVAAAALCILILLYAM. Over 1437–1491 the chain is Cytoplasmic; that stretch reads YKYRNRDEGSYHVDESRNYISNSATQPNGAAVKEKPIGVPKNKKDKKNKDKEYYV. Positions 1457 to 1491 are disordered; sequence SNSATQPNGAAVKEKPIGVPKNKKDKKNKDKEYYV.

This sequence belongs to the neurexin family.

It is found in the membrane. In terms of biological role, neuronal cell surface protein that may be involved in cell recognition and cell adhesion. This Danio rerio (Zebrafish) protein is Neurexin-1a (nrxn1a).